The sequence spans 123 residues: DNA-directed RNA polymerase subunit omega (123 aa).

The tract at residues 67–123 is disordered; it reads EESAADSLSLGGFSTADVEAEVGGGPVQPDPGASQERAFDEAADGTAQGSGDPDPTT.

It belongs to the RNA polymerase subunit omega family. The RNAP catalytic core consists of 2 alpha, 1 beta, 1 beta' and 1 omega subunit. When a sigma factor is associated with the core the holoenzyme is formed, which can initiate transcription.

The catalysed reaction is RNA(n) + a ribonucleoside 5'-triphosphate = RNA(n+1) + diphosphate. Promotes RNA polymerase assembly. Latches the N- and C-terminal regions of the beta' subunit thereby facilitating its interaction with the beta and alpha subunits. This chain is DNA-directed RNA polymerase subunit omega, found in Halorhodospira halophila (strain DSM 244 / SL1) (Ectothiorhodospira halophila (strain DSM 244 / SL1)).